We begin with the raw amino-acid sequence, 302 residues long: UDP-N-acetylenolpyruvoylglucosamine reductase (302 aa).

The region spanning K31–R213 is the FAD-binding PCMH-type domain. The active site involves R176. The active-site Proton donor is S226. Residue E296 is part of the active site.

It belongs to the MurB family. Requires FAD as cofactor.

Its subcellular location is the cytoplasm. It catalyses the reaction UDP-N-acetyl-alpha-D-muramate + NADP(+) = UDP-N-acetyl-3-O-(1-carboxyvinyl)-alpha-D-glucosamine + NADPH + H(+). The protein operates within cell wall biogenesis; peptidoglycan biosynthesis. In terms of biological role, cell wall formation. The sequence is that of UDP-N-acetylenolpyruvoylglucosamine reductase from Carboxydothermus hydrogenoformans (strain ATCC BAA-161 / DSM 6008 / Z-2901).